A 201-amino-acid chain; its full sequence is Large ribosomal subunit protein uL4 (201 aa).

A disordered region spans residues 45 to 75; that stretch reads AQKSRSEVSGSGKKPWRQKGTGRARSGSLRS.

The protein belongs to the universal ribosomal protein uL4 family. As to quaternary structure, part of the 50S ribosomal subunit.

In terms of biological role, one of the primary rRNA binding proteins, this protein initially binds near the 5'-end of the 23S rRNA. It is important during the early stages of 50S assembly. It makes multiple contacts with different domains of the 23S rRNA in the assembled 50S subunit and ribosome. Functionally, forms part of the polypeptide exit tunnel. This chain is Large ribosomal subunit protein uL4, found in Buchnera aphidicola subsp. Cinara cedri (strain Cc).